The primary structure comprises 102 residues: MRMGSLISTCLSSSKASSSARINDSSTWSPPPGQHISIRTFRELRARQTSSPIWRRTETPSNGESFRSMDDLQEGDNNQPMTLTPRRLTLEVSQRLLTSLGN.

Residues 1–27 (MRMGSLISTCLSSSKASSSARINDSST) are compositionally biased toward low complexity. 2 disordered regions span residues 1–35 (MRMGSLISTCLSSSKASSSARINDSSTWSPPPGQH) and 47–86 (RQTSSPIWRRTETPSNGESFRSMDDLQEGDNNQPMTLTPR).

This sequence belongs to the geminiviridae protein AC4/C4 family.

Pathogenicity determinant. May act as a suppressor of RNA-mediated gene silencing, also known as post-transcriptional gene silencing (PTGS), a mechanism of plant viral defense that limits the accumulation of viral RNAs. This chain is Protein C4, found in Cynanchum acutum (Little mallow).